Here is a 398-residue protein sequence, read N- to C-terminus: Chorismate synthase (398 aa).

R44 and R50 together coordinate NADP(+). FMN is bound by residues 133-135 (RAS), 261-262 (QA), G306, 321-325 (KPIPT), and R347.

Belongs to the chorismate synthase family. Homotetramer. FMNH2 is required as a cofactor.

It catalyses the reaction 5-O-(1-carboxyvinyl)-3-phosphoshikimate = chorismate + phosphate. The protein operates within metabolic intermediate biosynthesis; chorismate biosynthesis; chorismate from D-erythrose 4-phosphate and phosphoenolpyruvate: step 7/7. In terms of biological role, catalyzes the anti-1,4-elimination of the C-3 phosphate and the C-6 proR hydrogen from 5-enolpyruvylshikimate-3-phosphate (EPSP) to yield chorismate, which is the branch point compound that serves as the starting substrate for the three terminal pathways of aromatic amino acid biosynthesis. This reaction introduces a second double bond into the aromatic ring system. This chain is Chorismate synthase, found in Aquifex aeolicus (strain VF5).